The following is a 273-amino-acid chain: MADQQRGHNTSDSRRKSLAGKRTSQQTPTSSLSSGGVSMAAATTGTGTASPCGACKFLRRKCVSGCIFAPHFGSDQGAARFAAVHKVFGASNVSKLLHHIPVNRRHDAVVTISYEAQARLSDPVYGCVSTILALQQQVASLQAELSVVQSQLINSRVAMANVMQQQTHHQQQQQQLVVMQQPEYSNNSSASTTLAGAAMNSFTMTADAAAVSYDVMAPTNLEHSLQPMPPHQQRRGDYQHEDEEESGADFSVAVGSTAVASKVIFPAEDFHRR.

The segment covering 1-15 (MADQQRGHNTSDSRR) has biased composition (basic and acidic residues). The tract at residues 1 to 39 (MADQQRGHNTSDSRRKSLAGKRTSQQTPTSSLSSGGVSM) is disordered. The segment covering 23-39 (TSQQTPTSSLSSGGVSM) has biased composition (low complexity). The LOB domain maps to 50–152 (SPCGACKFLR…AELSVVQSQL (103 aa)). The interval 221–248 (LEHSLQPMPPHQQRRGDYQHEDEEESGA) is disordered.

The protein belongs to the LOB domain-containing protein family. Expressed in roots and flowers.

The sequence is that of LOB domain-containing protein 20 (LBD20) from Arabidopsis thaliana (Mouse-ear cress).